The primary structure comprises 138 residues: Small ribosomal subunit protein uS11c (138 aa).

A disordered region spans residues 1-24 (MTKPIPRIGSRKNGRISSRKNGRR). Over residues 9 to 24 (GSRKNGRISSRKNGRR) the composition is skewed to basic residues.

The protein belongs to the universal ribosomal protein uS11 family. In terms of assembly, part of the 30S ribosomal subunit.

The protein localises to the plastid. It localises to the chloroplast. The sequence is that of Small ribosomal subunit protein uS11c from Chloranthus spicatus (Chulantree).